The primary structure comprises 200 residues: Rho-related protein racH (200 aa).

Position 11-18 (11-18 (GDMSVGKT)) interacts with GTP. Positions 33-41 (YVPTVFDNY) match the Effector region motif. GTP is bound by residues 58–62 (DTAGS) and 117–120 (TKLD). Residues 178–200 (EELAKSKKDSKKGDKDSKDCIIQ) are disordered. A Cysteine methyl ester modification is found at C197. C197 is lipidated: S-geranylgeranyl cysteine. Residues 198–200 (IIQ) constitute a propeptide, removed in mature form.

It belongs to the small GTPase superfamily. Rho family.

It is found in the cell membrane. The chain is Rho-related protein racH (racH) from Dictyostelium discoideum (Social amoeba).